We begin with the raw amino-acid sequence, 407 residues long: Serine hydroxymethyltransferase (407 aa).

Pyridoxal 5'-phosphate is bound by residues Tyr-51 and 94–95; that span reads GS. (6S)-5,6,7,8-tetrahydrofolate contacts are provided by residues Leu-117 and 121–123; that span reads GHL. 3 residues coordinate pyridoxal 5'-phosphate: Ser-172, His-200, and His-225. Lys-226 bears the N6-(pyridoxal phosphate)lysine mark. Residue Glu-242 coordinates (6S)-5,6,7,8-tetrahydrofolate. Gly-258 contacts pyridoxal 5'-phosphate.

The protein belongs to the SHMT family. As to quaternary structure, homodimer. Pyridoxal 5'-phosphate is required as a cofactor.

It localises to the cytoplasm. It catalyses the reaction (6R)-5,10-methylene-5,6,7,8-tetrahydrofolate + glycine + H2O = (6S)-5,6,7,8-tetrahydrofolate + L-serine. It participates in one-carbon metabolism; tetrahydrofolate interconversion. Its pathway is amino-acid biosynthesis; glycine biosynthesis; glycine from L-serine: step 1/1. In terms of biological role, catalyzes the reversible interconversion of serine and glycine with tetrahydrofolate (THF) serving as the one-carbon carrier. This reaction serves as the major source of one-carbon groups required for the biosynthesis of purines, thymidylate, methionine, and other important biomolecules. Also exhibits THF-independent aldolase activity toward beta-hydroxyamino acids, producing glycine and aldehydes, via a retro-aldol mechanism. This is Serine hydroxymethyltransferase from Thermus thermophilus (strain ATCC 27634 / DSM 579 / HB8).